Reading from the N-terminus, the 152-residue chain is Ribosome maturation factor RimP (152 aa).

Belongs to the RimP family.

The protein resides in the cytoplasm. Required for maturation of 30S ribosomal subunits. The chain is Ribosome maturation factor RimP from Erwinia tasmaniensis (strain DSM 17950 / CFBP 7177 / CIP 109463 / NCPPB 4357 / Et1/99).